The chain runs to 429 residues: 3-phosphoshikimate 1-carboxyvinyltransferase (429 aa).

Residues Lys20, Ser21, and Arg25 each contribute to the 3-phosphoshikimate site. Lys20 provides a ligand contact to phosphoenolpyruvate. The phosphoenolpyruvate site is built by Gly89 and Arg118. 6 residues coordinate 3-phosphoshikimate: Ser164, Ser165, Gln166, Ser192, Asp311, and Lys338. A phosphoenolpyruvate-binding site is contributed by Gln166. Asp311 functions as the Proton acceptor in the catalytic mechanism. Positions 342 and 384 each coordinate phosphoenolpyruvate.

The protein belongs to the EPSP synthase family. In terms of assembly, monomer.

It is found in the cytoplasm. It catalyses the reaction 3-phosphoshikimate + phosphoenolpyruvate = 5-O-(1-carboxyvinyl)-3-phosphoshikimate + phosphate. The protein operates within metabolic intermediate biosynthesis; chorismate biosynthesis. Functionally, catalyzes the transfer of the enolpyruvyl moiety of phosphoenolpyruvate (PEP) to the 5-hydroxyl of shikimate-3-phosphate (S3P) to produce enolpyruvyl shikimate-3-phosphate and inorganic phosphate. This chain is 3-phosphoshikimate 1-carboxyvinyltransferase, found in Methanococcus maripaludis (strain C6 / ATCC BAA-1332).